The primary structure comprises 353 residues: JmjC domain-containing protein E (353 aa).

Residues 138 to 348 (YYIQYQNNSL…ETTKYQKQIK (211 aa)) form the JmjC domain.

This Dictyostelium discoideum (Social amoeba) protein is JmjC domain-containing protein E (jcdE).